Reading from the N-terminus, the 413-residue chain is Branched-chain-amino-acid aminotransferase 3, chloroplastic (413 aa).

Residues 1–60 (MERAAILPSVNQNYLLCPSRAFSTRLHSSTRNLSPPSFASIKLQHSSSSVSSNGGISLTR) constitute a chloroplast transit peptide. Residue Lys-259 is modified to N6-(pyridoxal phosphate)lysine.

Belongs to the class-IV pyridoxal-phosphate-dependent aminotransferase family. Pyridoxal 5'-phosphate serves as cofactor. Expressed in the phloem cells.

Its subcellular location is the plastid. It is found in the chloroplast. It carries out the reaction L-leucine + 2-oxoglutarate = 4-methyl-2-oxopentanoate + L-glutamate. The catalysed reaction is L-isoleucine + 2-oxoglutarate = (S)-3-methyl-2-oxopentanoate + L-glutamate. The enzyme catalyses L-valine + 2-oxoglutarate = 3-methyl-2-oxobutanoate + L-glutamate. It catalyses the reaction a 2-oxocarboxylate + L-methionine = 4-methylsulfanyl-2-oxobutanoate + an L-alpha-amino acid. It functions in the pathway amino-acid biosynthesis; L-isoleucine biosynthesis; L-isoleucine from 2-oxobutanoate: step 4/4. It participates in amino-acid biosynthesis; L-leucine biosynthesis; L-leucine from 3-methyl-2-oxobutanoate: step 4/4. The protein operates within amino-acid biosynthesis; L-valine biosynthesis; L-valine from pyruvate: step 4/4. Inhibited by Ser- or Thr-derived imine. In terms of biological role, converts 2-oxo acids to branched-chain amino acids. Acts on leucine, isoleucine and valine. Also involved in methionine chain elongation cycle of aliphatic glucosinolate formation. Catalyzes the conversion of 5-methylthiopentyl-2-oxo and 6-methylthiohexyl-2-oxo acids to their respective Met derivatives, homomethionine and dihomo-methionine, respectively. The chain is Branched-chain-amino-acid aminotransferase 3, chloroplastic from Arabidopsis thaliana (Mouse-ear cress).